The following is a 684-amino-acid chain: Probable phosphoenolpyruvate synthase (684 aa).

Residue histidine 424 is the Tele-phosphohistidine intermediate of the active site. 3 residues coordinate substrate: arginine 517, arginine 564, and glutamate 661. Glutamate 661 provides a ligand contact to Mg(2+).

It belongs to the PEP-utilizing enzyme family. It depends on Mg(2+) as a cofactor.

The catalysed reaction is pyruvate + ATP + H2O = phosphoenolpyruvate + AMP + phosphate + 2 H(+). The protein operates within carbohydrate biosynthesis; gluconeogenesis. In terms of biological role, catalyzes the phosphorylation of pyruvate to phosphoenolpyruvate. This is Probable phosphoenolpyruvate synthase (ppsA) from Methanothermobacter thermautotrophicus (strain ATCC 29096 / DSM 1053 / JCM 10044 / NBRC 100330 / Delta H) (Methanobacterium thermoautotrophicum).